The chain runs to 246 residues: MANEACPCPCDIGDKIEYGAKGQEVQIEHIKAYVSKPHSSTDKAVIVVQDIFGWQLPNTRFMADLLTAHGYITICPDFFVGQEPWKPSNDRSTFTEWLQTRQATKVEKEINVVLKYLKEQCHVKKIGVIGFCWGGVVTHHLMLKYPELKAGVSFYGIIRDVEDRYNLLNPTLFIFAEMDHVIPLEQVSLLEEKLKVHSKVDFQVKVFPKQTHGFVHRKNEDINPEDKPFIEEARKNMLEWLHKYIN.

Catalysis depends on residues cysteine 132, aspartate 179, and histidine 212.

This sequence belongs to the dienelactone hydrolase family.

Its subcellular location is the cytoplasm. It localises to the cytosol. Cysteine hydrolase. The sequence is that of Carboxymethylenebutenolidase homolog (cmbl) from Xenopus tropicalis (Western clawed frog).